A 57-amino-acid chain; its full sequence is Protein translocase subunit SecE (57 aa).

Residues 33-53 traverse the membrane as a helical segment; that stretch reads GAGIFLVGLLGFIIFAVMSFL.

It belongs to the SecE/SEC61-gamma family. Component of the Sec protein translocase complex. Heterotrimer consisting of SecY (alpha), SecG (beta) and SecE (gamma) subunits. The heterotrimers can form oligomers, although 1 heterotrimer is thought to be able to translocate proteins. Interacts with the ribosome. May interact with SecDF, and other proteins may be involved.

It localises to the cell membrane. Its function is as follows. Essential subunit of the Sec protein translocation channel SecYEG. Clamps together the 2 halves of SecY. May contact the channel plug during translocation. The chain is Protein translocase subunit SecE from Haloferax mediterranei (strain ATCC 33500 / DSM 1411 / JCM 8866 / NBRC 14739 / NCIMB 2177 / R-4) (Halobacterium mediterranei).